A 323-amino-acid chain; its full sequence is Aspartate carbamoyltransferase catalytic subunit (323 aa).

Residues arginine 71 and threonine 72 each contribute to the carbamoyl phosphate site. Lysine 99 contributes to the L-aspartate binding site. Carbamoyl phosphate is bound by residues arginine 121, histidine 151, and glutamine 154. L-aspartate-binding residues include arginine 184 and arginine 239. Glycine 280 and proline 281 together coordinate carbamoyl phosphate.

The protein belongs to the aspartate/ornithine carbamoyltransferase superfamily. ATCase family. Heterododecamer (2C3:3R2) of six catalytic PyrB chains organized as two trimers (C3), and six regulatory PyrI chains organized as three dimers (R2).

The catalysed reaction is carbamoyl phosphate + L-aspartate = N-carbamoyl-L-aspartate + phosphate + H(+). It functions in the pathway pyrimidine metabolism; UMP biosynthesis via de novo pathway; (S)-dihydroorotate from bicarbonate: step 2/3. Functionally, catalyzes the condensation of carbamoyl phosphate and aspartate to form carbamoyl aspartate and inorganic phosphate, the committed step in the de novo pyrimidine nucleotide biosynthesis pathway. The protein is Aspartate carbamoyltransferase catalytic subunit of Ralstonia nicotianae (strain ATCC BAA-1114 / GMI1000) (Ralstonia solanacearum).